The chain runs to 438 residues: 3-phosphoshikimate 1-carboxyvinyltransferase (438 aa).

K21 contacts phosphoenolpyruvate. Positions 22 and 26 each coordinate 3-phosphoshikimate. The interval N93–T96 is phosphoenolpyruvate. Positions 95, 96, and 123 each coordinate phosphoenolpyruvate. S167, A168, Q169, D315, and K342 together coordinate 3-phosphoshikimate. Q169 lines the phosphoenolpyruvate pocket. Residue D315 is the Proton acceptor of the active site. Phosphoenolpyruvate contacts are provided by R346 and R387.

This sequence belongs to the EPSP synthase family. In terms of assembly, homodimer or homotetramer.

Its subcellular location is the cytoplasm. It catalyses the reaction 3-phosphoshikimate + phosphoenolpyruvate = 5-O-(1-carboxyvinyl)-3-phosphoshikimate + phosphate. It functions in the pathway metabolic intermediate biosynthesis; chorismate biosynthesis; chorismate from D-erythrose 4-phosphate and phosphoenolpyruvate: step 6/7. Its function is as follows. Catalyzes the transfer of the enolpyruvyl moiety of phosphoenolpyruvate (PEP) to the 5-hydroxyl of shikimate-3-phosphate (S3P) to produce enolpyruvyl shikimate-3-phosphate and inorganic phosphate. The chain is 3-phosphoshikimate 1-carboxyvinyltransferase from Coxiella burnetii (strain RSA 493 / Nine Mile phase I).